Consider the following 488-residue polypeptide: Aspartyl/glutamyl-tRNA(Asn/Gln) amidotransferase subunit B (488 aa).

This sequence belongs to the GatB/GatE family. GatB subfamily. Heterotrimer of A, B and C subunits.

The enzyme catalyses L-glutamyl-tRNA(Gln) + L-glutamine + ATP + H2O = L-glutaminyl-tRNA(Gln) + L-glutamate + ADP + phosphate + H(+). It carries out the reaction L-aspartyl-tRNA(Asn) + L-glutamine + ATP + H2O = L-asparaginyl-tRNA(Asn) + L-glutamate + ADP + phosphate + 2 H(+). In terms of biological role, allows the formation of correctly charged Asn-tRNA(Asn) or Gln-tRNA(Gln) through the transamidation of misacylated Asp-tRNA(Asn) or Glu-tRNA(Gln) in organisms which lack either or both of asparaginyl-tRNA or glutaminyl-tRNA synthetases. The reaction takes place in the presence of glutamine and ATP through an activated phospho-Asp-tRNA(Asn) or phospho-Glu-tRNA(Gln). The sequence is that of Aspartyl/glutamyl-tRNA(Asn/Gln) amidotransferase subunit B from Neorickettsia sennetsu (strain ATCC VR-367 / Miyayama) (Ehrlichia sennetsu).